Consider the following 385-residue polypeptide: cAMP-dependent protein kinase regulatory subunit (385 aa).

Polar residues predominate over residues 1–22 (MSSTGFTSPFGNANPFGSSGRS). Disordered stretches follow at residues 1-51 (MSST…GVKN) and 77-111 (DFPA…PVHP). A dimerization and phosphorylation region spans residues 1–128 (MSSTGFTSPF…RLKKAISGNF (128 aa)). Ser89 is subject to Phosphoserine. 3',5'-cyclic AMP contacts are provided by residues 129–260 (LFNH…EEVP), Glu207, Arg216, 261–378 (ILKT…EAEE), Glu328, and Arg337.

It belongs to the cAMP-dependent kinase regulatory chain family. As to quaternary structure, tetramer, composed of 2 regulatory (R) and 2 catalytic (C) subunits. In the presence of cAMP it dissociates into 2 active monomeric C subunits and an R dimer.

The sequence is that of cAMP-dependent protein kinase regulatory subunit (mcb) from Neurospora crassa (strain ATCC 24698 / 74-OR23-1A / CBS 708.71 / DSM 1257 / FGSC 987).